A 478-amino-acid polypeptide reads, in one-letter code: UDP-N-acetylmuramate--L-alanine ligase (478 aa).

126 to 132 is a binding site for ATP; sequence GTHGKTT.

Belongs to the MurCDEF family.

The protein localises to the cytoplasm. It catalyses the reaction UDP-N-acetyl-alpha-D-muramate + L-alanine + ATP = UDP-N-acetyl-alpha-D-muramoyl-L-alanine + ADP + phosphate + H(+). The protein operates within cell wall biogenesis; peptidoglycan biosynthesis. In terms of biological role, cell wall formation. This Mycolicibacterium vanbaalenii (strain DSM 7251 / JCM 13017 / BCRC 16820 / KCTC 9966 / NRRL B-24157 / PYR-1) (Mycobacterium vanbaalenii) protein is UDP-N-acetylmuramate--L-alanine ligase.